We begin with the raw amino-acid sequence, 549 residues long: Arginine--tRNA ligase (549 aa).

The short motif at 122–132 (ANPTGFLHLGH) is the 'HIGH' region element.

This sequence belongs to the class-I aminoacyl-tRNA synthetase family. Monomer.

The protein resides in the cytoplasm. The catalysed reaction is tRNA(Arg) + L-arginine + ATP = L-arginyl-tRNA(Arg) + AMP + diphosphate. The sequence is that of Arginine--tRNA ligase from Mycoplasmoides gallisepticum (strain R(low / passage 15 / clone 2)) (Mycoplasma gallisepticum).